Here is a 734-residue protein sequence, read N- to C-terminus: Photosystem I P700 chlorophyll a apoprotein A2 (734 aa).

Transmembrane regions (helical) follow at residues 46 to 69 (IFAS…FHVA), 135 to 158 (LYTG…LHLQ), 175 to 199 (LNHH…HVAI), 273 to 291 (MAHH…GHMY), 330 to 353 (LHFQ…QHMY), 369 to 395 (SALY…IFFI), 417 to 439 (ALIS…LYVH), and 517 to 535 (FLVH…LILV). C559 and C568 together coordinate [4Fe-4S] cluster. 2 helical membrane passes run 575–596 (AFYL…YWHW) and 643–665 (LSVW…MFLI). Residues H654, M662, and Y670 each coordinate chlorophyll a. W671 contacts phylloquinone. A helical transmembrane segment spans residues 707–727 (LVGLAHFSVGYVFTYAAFVIA).

It belongs to the PsaA/PsaB family. As to quaternary structure, the PsaA/B heterodimer binds the P700 chlorophyll special pair and subsequent electron acceptors. PSI consists of a core antenna complex that captures photons, and an electron transfer chain that converts photonic excitation into a charge separation. The eukaryotic PSI reaction center is composed of at least 11 subunits. Requires P700 is a chlorophyll a/chlorophyll a' dimer, A0 is one or more chlorophyll a, A1 is one or both phylloquinones and FX is a shared 4Fe-4S iron-sulfur center. as cofactor.

The protein localises to the plastid. Its subcellular location is the chloroplast thylakoid membrane. The catalysed reaction is reduced [plastocyanin] + hnu + oxidized [2Fe-2S]-[ferredoxin] = oxidized [plastocyanin] + reduced [2Fe-2S]-[ferredoxin]. In terms of biological role, psaA and PsaB bind P700, the primary electron donor of photosystem I (PSI), as well as the electron acceptors A0, A1 and FX. PSI is a plastocyanin/cytochrome c6-ferredoxin oxidoreductase, converting photonic excitation into a charge separation, which transfers an electron from the donor P700 chlorophyll pair to the spectroscopically characterized acceptors A0, A1, FX, FA and FB in turn. Oxidized P700 is reduced on the lumenal side of the thylakoid membrane by plastocyanin or cytochrome c6. The chain is Photosystem I P700 chlorophyll a apoprotein A2 from Nephroselmis olivacea (Green alga).